Here is a 304-residue protein sequence, read N- to C-terminus: Choline-phosphate cytidylyltransferase 2 (304 aa).

Residues 28-36 (IFDLFHFGH) and lysine 66 contribute to the CTP site. Substrate is bound by residues lysine 66 and tryptophan 95. CTP-binding positions include 112–113 (HD), tyrosine 117, and 142–146 (RTEGI). A disordered region spans residues 266 to 292 (QNGLTISKDNDDEQMSDDNEFAEEDCV). Residues 275 to 291 (NDDEQMSDDNEFAEEDC) are compositionally biased toward acidic residues.

It belongs to the cytidylyltransferase family.

It catalyses the reaction phosphocholine + CTP + H(+) = CDP-choline + diphosphate. It functions in the pathway phospholipid metabolism; phosphatidylcholine biosynthesis; phosphatidylcholine from phosphocholine: step 1/2. Its function is as follows. Plays an important role in the biosynthesis of the phospholipid phosphatidylcholine. Catalyzes the formation of CDP-choline. The chain is Choline-phosphate cytidylyltransferase 2 from Arabidopsis thaliana (Mouse-ear cress).